The primary structure comprises 1257 residues: ATP-binding cassette sub-family B member 5 (1257 aa).

Residues 1-24 (MENSERAEEMQENYQRNGTAEEQP) are disordered. Asn-17 is a glycosylation site (N-linked (GlcNAc...) asparagine). A helical membrane pass occupies residues 49-69 (ILGILASLVNGACLPLMPLVL). The region spanning 49-350 (ILGILASLVN…AAVPHFETFA (302 aa)) is the ABC transmembrane type-1 1 domain. Residues Asn-85 and Asn-91 are each glycosylated (N-linked (GlcNAc...) asparagine). The next 5 membrane-spanning stretches (helical) occupy residues 110–130 (YVGI…LWII), 181–201 (KIAL…VGLV), 203–223 (GWKL…SAAA), 294–314 (VYFF…SLIL), and 322–342 (IGTV…IGAA). 3 N-linked (GlcNAc...) asparagine glycosylation sites follow: Asn-371, Asn-390, and Asn-423. The ABC transporter 1 domain occupies 386 to 622 (VEFKNVSFNY…RGLYYSLVMS (237 aa)). An ATP-binding site is contributed by 421-428 (GLNGSGKS). 2 helical membrane-spanning segments follow: residues 693–713 (VLGT…SIIF) and 737–757 (MIFV…GLFY). Residues 693-980 (VLGTLASVLN…TLVLAPEYSK (288 aa)) enclose the ABC transmembrane type-1 2 domain. 2 N-linked (GlcNAc...) asparagine glycosylation sites follow: Asn-789 and Asn-819. The helical transmembrane segment at 827-847 (VIISFIYGWEMTFLILSIAPV) threads the bilayer. Asn-910 is a glycosylation site (N-linked (GlcNAc...) asparagine). The next 2 helical transmembrane spans lie at 917-937 (IIGS…AAGF) and 954-974 (MFIV…TLVL). In terms of domain architecture, ABC transporter 2 spans 1015 to 1253 (LEFREVSFFY…RDIYFKLVNA (239 aa)). Residue 1050–1057 (GSSGCGKS) coordinates ATP. 2 N-linked (GlcNAc...) asparagine glycosylation sites follow: Asn-1104 and Asn-1188.

The protein belongs to the ABC transporter superfamily. ABCB family. Multidrug resistance exporter (TC 3.A.1.201) subfamily. Expressed by CD133-expressing progenitor cells among epidermal melanocytes (at protein level). Widely expressed with specific expression in pigment cells. Highly expressed in several malignant tissues: highly expressed in clinical melanomas, with low expression in normal skin. In melanoma, marks malignant melanoma-initiating cells (MMIC), in which clinical virulence resides as a consequence of unlimited self-renewal capacity, resulting in inexorable tumor progression and metastasis. Also highly expressed in a number of leukemia cells. Expressed in basal limbal epithelium.

Its subcellular location is the cell membrane. It catalyses the reaction daunorubicin(in) + ATP + H2O = daunorubicin(out) + ADP + phosphate + H(+). Energy-dependent efflux transporter responsible for decreased drug accumulation in multidrug-resistant cells. Specifically present in limbal stem cells, where it plays a key role in corneal development and repair. This is ATP-binding cassette sub-family B member 5 from Homo sapiens (Human).